The primary structure comprises 76 residues: Small ribosomal subunit protein bS18 (76 aa).

This sequence belongs to the bacterial ribosomal protein bS18 family. Part of the 30S ribosomal subunit. Forms a tight heterodimer with protein bS6.

Its function is as follows. Binds as a heterodimer with protein bS6 to the central domain of the 16S rRNA, where it helps stabilize the platform of the 30S subunit. This is Small ribosomal subunit protein bS18 from Pseudomonas fluorescens (strain ATCC BAA-477 / NRRL B-23932 / Pf-5).